A 471-amino-acid polypeptide reads, in one-letter code: ATP synthase subunit beta (471 aa).

153–160 (GGAGVGKT) contacts ATP.

It belongs to the ATPase alpha/beta chains family. In terms of assembly, F-type ATPases have 2 components, CF(1) - the catalytic core - and CF(0) - the membrane proton channel. CF(1) has five subunits: alpha(3), beta(3), gamma(1), delta(1), epsilon(1). CF(0) has four main subunits: a(1), b(1), b'(1) and c(9-12).

It is found in the cell inner membrane. It catalyses the reaction ATP + H2O + 4 H(+)(in) = ADP + phosphate + 5 H(+)(out). Produces ATP from ADP in the presence of a proton gradient across the membrane. The catalytic sites are hosted primarily by the beta subunits. This is ATP synthase subunit beta from Methylibium petroleiphilum (strain ATCC BAA-1232 / LMG 22953 / PM1).